Reading from the N-terminus, the 143-residue chain is uncharacterized protein (143 aa).

2 helical membrane-spanning segments follow: residues 16–36 (LIFA…IFVW) and 48–68 (ICYI…FIYV). N-linked (GlcNAc...) asparagine; by host glycosylation is present at N71.

Its subcellular location is the membrane. This is an uncharacterized protein from Acanthamoeba polyphaga (Amoeba).